The sequence spans 430 residues: Cysteate synthase (430 aa).

At K106 the chain carries N6-(pyridoxal phosphate)lysine. Pyridoxal 5'-phosphate is bound by residues N132 and T381.

The protein belongs to the threonine synthase family. Cysteate synthase subfamily. As to quaternary structure, homotrimer. The cofactor is pyridoxal 5'-phosphate.

It carries out the reaction O-phospho-L-serine + sulfite + H(+) = L-cysteate + phosphate. It participates in cofactor biosynthesis; coenzyme M biosynthesis. In terms of biological role, specifically catalyzes the beta-elimination of phosphate from L-phosphoserine and the beta-addition of sulfite to the dehydroalanine intermediate to produce L-cysteate. The protein is Cysteate synthase of Methanoculleus marisnigri (strain ATCC 35101 / DSM 1498 / JR1).